Here is a 348-residue protein sequence, read N- to C-terminus: WRKY transcription factor WRKY71 (348 aa).

Residues 50 to 84 (VAALEAELKRMGAENRQLSEMLAAVAAKYEALQSQ) are a coiled coil. 2 disordered regions span residues 91 to 141 (ASAN…APHH) and 246 to 287 (GEHN…APVV). Residues 102–114 (NQSSTSEGGSVSP) are compositionally biased toward low complexity. A Nuclear localization signal motif is present at residues 116–122 (RKRKSES). Residues 126–136 (SPPPPPPPHPH) show a composition bias toward pro residues. A DNA-binding region (WRKY) is located at residues 187–253 (DLSLVVKDGY…YEGEHNHGQP (67 aa)). A transcription repression of gibberellic acid (GA)-induced promoters region spans residues 267–348 (SGKSAGKPPH…RILELSPTKD (82 aa)). The span at 275–286 (PHAPAAAPPAPV) shows a compositional bias: pro residues.

The protein belongs to the WRKY group II-a family. Interacts with WRKY51; this interaction promotes W box binding of the complex WRKY51/WRKY71 in a zinc ion-dependent manner. Highly expressed in aleurone cells. In seeds, predominantly present in the plumule, radicle and scutellum of the embryo. Expressed in roots, stems, young leaves and spikelets.

Its subcellular location is the nucleus. Transcription repressor. Interacts specifically with the W box (5'-(T)TGAC[CT]-3'), a frequently occurring elicitor-responsive cis-acting element. Represses specifically gibberellic acid (GA)-induced promoters in aleurone cells, probably by interfering with GAM1. Regulates, probably indirectly, the activation of defense-related genes such as GF14E during defense response. Modulates plant innate immunity against X.oryzae pv. oryzae (Xoo). Confers resistance to the virulent bacterial pathogen X.oryzae pv. oryzae (Xoo) 13751, probably via the regulation of NPR1 and PR1b defense signaling pathways. This is WRKY transcription factor WRKY71 from Oryza sativa subsp. indica (Rice).